The following is a 122-amino-acid chain: MEDTPLVISKQKTEVVCGVPTQVVCTAFSSHILVVVTQFGKMGTLVSLEPSSVASDVSKPVLTTKVLLGQDEPLIHVFAKNLVAFVSQEAGNRAVLLAVAVKDKSMEGLKALREVIRVCQVW.

An N-acetylmethionine modification is found at methionine 1.

It belongs to the PSMG3 family. Homodimer. Interacts with PSMG4. Interacts directly with alpha and beta subunits of the 20S proteasome but dissociates before the formation of half-proteasomes, probably upon recruitment of POMP.

Chaperone protein which promotes assembly of the 20S proteasome. May cooperate with PSMG1-PSMG2 heterodimers to orchestrate the correct assembly of proteasomes. The sequence is that of Proteasome assembly chaperone 3 from Homo sapiens (Human).